The sequence spans 204 residues: Small ribosomal subunit protein uS7 (204 aa).

M1 carries the N-acetylmethionine modification. T2 is modified (N-acetylthreonine; in 40S ribosomal protein S5, N-terminally processed). T14 is modified (phosphothreonine). K47 bears the N6-acetyllysine; alternate mark. K47 participates in a covalent cross-link: Glycyl lysine isopeptide (Lys-Gly) (interchain with G-Cter in SUMO2); alternate. S142 carries the phosphoserine modification.

This sequence belongs to the universal ribosomal protein uS7 family. As to quaternary structure, component of the small ribosomal subunit. Part of the small subunit (SSU) processome, composed of more than 70 proteins and the RNA chaperone small nucleolar RNA (snoRNA) U3.

It localises to the cytoplasm. It is found in the nucleus. The protein localises to the nucleolus. In terms of biological role, component of the small ribosomal subunit. The ribosome is a large ribonucleoprotein complex responsible for the synthesis of proteins in the cell. Part of the small subunit (SSU) processome, first precursor of the small eukaryotic ribosomal subunit. During the assembly of the SSU processome in the nucleolus, many ribosome biogenesis factors, an RNA chaperone and ribosomal proteins associate with the nascent pre-rRNA and work in concert to generate RNA folding, modifications, rearrangements and cleavage as well as targeted degradation of pre-ribosomal RNA by the RNA exosome. In Mus musculus (Mouse), this protein is Small ribosomal subunit protein uS7 (Rps5).